The chain runs to 101 residues: NADH-quinone oxidoreductase subunit K (101 aa).

A run of 3 helical transmembrane segments spans residues 4 to 24, 30 to 50, and 61 to 81; these read LAHY…GIFL, IIIL…FVAF, and IFVF…LAIL.

The protein belongs to the complex I subunit 4L family. NDH-1 is composed of 14 different subunits. Subunits NuoA, H, J, K, L, M, N constitute the membrane sector of the complex.

It localises to the cell inner membrane. It catalyses the reaction a quinone + NADH + 5 H(+)(in) = a quinol + NAD(+) + 4 H(+)(out). Functionally, NDH-1 shuttles electrons from NADH, via FMN and iron-sulfur (Fe-S) centers, to quinones in the respiratory chain. The immediate electron acceptor for the enzyme in this species is believed to be ubiquinone. Couples the redox reaction to proton translocation (for every two electrons transferred, four hydrogen ions are translocated across the cytoplasmic membrane), and thus conserves the redox energy in a proton gradient. The chain is NADH-quinone oxidoreductase subunit K from Paraburkholderia xenovorans (strain LB400).